The sequence spans 709 residues: ATP-binding cassette sub-family F member 3 (709 aa).

Ala2 carries the N-acetylalanine modification. Ser83 is modified (phosphoserine). Over residues Arg129–Leu143 the composition is skewed to basic and acidic residues. Positions Arg129 to Gly171 are disordered. Residues Ser155, Ser157, and Ser161 each carry the phosphoserine modification. Over residues Ser161–Gly171 the composition is skewed to basic and acidic residues. ABC transporter domains are found at residues Val178–Gln424 and Leu492–Gly707. Gly210–Thr217 is an ATP binding site. Phosphoserine is present on Ser283. Gly525–Ser532 lines the ATP pocket.

The protein belongs to the ABC transporter superfamily. ABCF family. EF3 subfamily.

Its function is as follows. Displays an antiviral effect against flaviviruses such as west Nile virus (WNV) in the presence of OAS1B. This chain is ATP-binding cassette sub-family F member 3 (Abcf3), found in Mus musculus (Mouse).